We begin with the raw amino-acid sequence, 578 residues long: Dystrotelin (578 aa).

Residues 223 to 279 (THPARCTLCRTFPITGLRYRCLKCLNFDICQMCFLSGLHSKSHQKSHPVIEHCIQMS) form a ZZ-type zinc finger. Residues C228, C231, C243, C246, C252, C255, H265, and H269 each coordinate Zn(2+). Residues 322 to 351 (HHAQARLLKKQLNQYKDKLQAIYTSQEERI) adopt a coiled-coil conformation. The tract at residues 382-475 (RLQPPGPSSS…QSQTQKMPQK (94 aa)) is disordered. Basic and acidic residues-rich tracts occupy residues 399-410 (KVDHSSTEKVPK) and 431-451 (PKLD…HALR). The segment covering 455-472 (SPETTLHSTRAQSQTQKM) has biased composition (polar residues). Positions 503 to 537 (ALAAVEKKEAGNIKERKDELEEEELQELLSKLMDA) form a coiled coil.

It is found in the cell membrane. This Homo sapiens (Human) protein is Dystrotelin (DYTN).